Reading from the N-terminus, the 20-residue chain is Protein C activator (20 aa).

In terms of domain architecture, Peptidase S1 spans 1 to 20 (VVGGDECNINEHRSLALMYA).

Belongs to the peptidase S1 family. Snake venom subfamily. In terms of assembly, monomer. Post-translationally, glycosylated. In terms of tissue distribution, expressed by the venom gland.

It localises to the secreted. With respect to regulation, inhibited by calcium. In terms of biological role, snake venom serine protease that selectively cleaves the heavy chain of protein C (PROC). This activation is thrombomodulin-independent. The polypeptide is Protein C activator (Agkistrodon bilineatus (Cantil)).